Consider the following 188-residue polypeptide: Probable nicotinate-nucleotide adenylyltransferase (188 aa).

Belongs to the NadD family.

It catalyses the reaction nicotinate beta-D-ribonucleotide + ATP + H(+) = deamido-NAD(+) + diphosphate. It participates in cofactor biosynthesis; NAD(+) biosynthesis; deamido-NAD(+) from nicotinate D-ribonucleotide: step 1/1. Functionally, catalyzes the reversible adenylation of nicotinate mononucleotide (NaMN) to nicotinic acid adenine dinucleotide (NaAD). In Sulfurovum sp. (strain NBC37-1), this protein is Probable nicotinate-nucleotide adenylyltransferase.